The chain runs to 459 residues: Zeatin O-glucosyltransferase (459 aa).

The Proton acceptor role is filled by histidine 26. Residue histidine 26 coordinates an anthocyanidin. Aspartate 125 (charge relay) is an active-site residue. UDP-alpha-D-glucose is bound by residues serine 148, alanine 335, glutamine 337, histidine 352, tryptophan 355, asparagine 356, serine 357, glutamate 360, aspartate 376, and glutamine 377.

It belongs to the UDP-glycosyltransferase family.

It carries out the reaction trans-zeatin + UDP-alpha-D-glucose = O-beta-D-glucosyl-trans-zeatin + UDP + H(+). Functionally, may regulate active versus storage forms of cytokinins, and could have an impact on seed growth. Can also use UDP-xylose to catalyze the formation of O-xylosylzeatin but at much lower affinity. This chain is Zeatin O-glucosyltransferase, found in Phaseolus lunatus (Lima bean).